Reading from the N-terminus, the 367-residue chain is tRNA-specific 2-thiouridylase MnmA (367 aa).

Residues Gly-13–Ser-20 and Met-39 each bind ATP. The segment at Asn-99 to Asp-101 is interaction with target base in tRNA. Cys-104 acts as the Nucleophile in catalysis. Cys-104 and Cys-200 are joined by a disulfide. Residue Gly-128 coordinates ATP. Residues Lys-150–Gln-152 form an interaction with tRNA region. Cys-200 functions as the Cysteine persulfide intermediate in the catalytic mechanism. The tract at residues Arg-307 to Tyr-308 is interaction with tRNA.

It belongs to the MnmA/TRMU family.

It is found in the cytoplasm. The catalysed reaction is S-sulfanyl-L-cysteinyl-[protein] + uridine(34) in tRNA + AH2 + ATP = 2-thiouridine(34) in tRNA + L-cysteinyl-[protein] + A + AMP + diphosphate + H(+). Its function is as follows. Catalyzes the 2-thiolation of uridine at the wobble position (U34) of tRNA, leading to the formation of s(2)U34. This is tRNA-specific 2-thiouridylase MnmA from Neisseria meningitidis serogroup B (strain ATCC BAA-335 / MC58).